Reading from the N-terminus, the 463-residue chain is Glutamate--tRNA ligase (463 aa).

The short motif at 8 to 18 is the 'HIGH' region element; that stretch reads PSPTGYLHIGG. The short motif at 236–240 is the 'KMSKS' region element; that stretch reads RLSKR. Lysine 239 serves as a coordination point for ATP.

It belongs to the class-I aminoacyl-tRNA synthetase family. Glutamate--tRNA ligase type 1 subfamily. As to quaternary structure, monomer.

Its subcellular location is the cytoplasm. It catalyses the reaction tRNA(Glu) + L-glutamate + ATP = L-glutamyl-tRNA(Glu) + AMP + diphosphate. Its function is as follows. Catalyzes the attachment of glutamate to tRNA(Glu) in a two-step reaction: glutamate is first activated by ATP to form Glu-AMP and then transferred to the acceptor end of tRNA(Glu). This is Glutamate--tRNA ligase from Nitrosomonas eutropha (strain DSM 101675 / C91 / Nm57).